A 315-amino-acid polypeptide reads, in one-letter code: Probable carboxylesterase 3 (315 aa).

Position 1 is an N-acetylmethionine (Met1). The Involved in the stabilization of the negatively charged intermediate by the formation of the oxyanion hole signature appears at 81 to 83 (HGG). Catalysis depends on residues Ser160, Asp258, and His290.

This sequence belongs to the 'GDXG' lipolytic enzyme family. Expressed in flowers and siliques.

It carries out the reaction a carboxylic ester + H2O = an alcohol + a carboxylate + H(+). In terms of biological role, carboxylesterase acting on esters with varying acyl chain length. In Arabidopsis thaliana (Mouse-ear cress), this protein is Probable carboxylesterase 3 (CXE3).